The following is a 563-amino-acid chain: Glutamate--tRNA ligase (563 aa).

A disordered region spans residues 61–94; it reads PEEQQKEVESLGGLEQHTKKEEKPKGLPELKNTE. A compositionally biased stretch (basic and acidic residues) spans 76–94; it reads QHTKKEEKPKGLPELKNTE. Positions 104–114 match the 'HIGH' region motif; that stretch reads PNPSGPLHIGH.

This sequence belongs to the class-I aminoacyl-tRNA synthetase family. Glutamate--tRNA ligase type 2 subfamily.

The protein localises to the cytoplasm. It carries out the reaction tRNA(Glu) + L-glutamate + ATP = L-glutamyl-tRNA(Glu) + AMP + diphosphate. Catalyzes the attachment of glutamate to tRNA(Glu) in a two-step reaction: glutamate is first activated by ATP to form Glu-AMP and then transferred to the acceptor end of tRNA(Glu). This chain is Glutamate--tRNA ligase, found in Methanosphaera stadtmanae (strain ATCC 43021 / DSM 3091 / JCM 11832 / MCB-3).